We begin with the raw amino-acid sequence, 595 residues long: Zinc finger protein 467 (595 aa).

Residues 1 to 67 are disordered; sequence MRETLEALSS…EEGAHTEQAE (67 aa). K97 is covalently cross-linked (Glycyl lysine isopeptide (Lys-Gly) (interchain with G-Cter in SUMO2)). C2H2-type zinc fingers lie at residues 160–182, 188–210, 216–238, 244–266, 272–294, and 300–322; these read YGCGECERRFRDQLTLRLHQRLH, CACPDCGRSFTQRAHMLLHQRSH, FPCSECDKRFSKKAHLTRHLRTH, YPCAECGKRFSQKIHLGSHQKTH, FPCTECEKRFRKKTHLIRHQRIH, and YQCAQCARSFTHKQHLVRHQRVH. Residues 313–350 are disordered; that stretch reads QHLVRHQRVHQTAGPARPSPDSSASPHSTAPSPTPSFP. Residues 325–343 are compositionally biased toward low complexity; it reads AGPARPSPDSSASPHSTAP. 6 C2H2-type zinc fingers span residues 355-377, 431-453, 459-481, 487-509, 515-537, and 543-565; these read FACSDCGLSFGWKKNLATHQCLH, FFCPDCGRGFSHGQHLARHPRVH, FACTQCDRRFGSRPNLVAHSRAH, FACAQCGRRFSRKSHLGRHQAVH, HACAVCARSFSSKTNLVRHQAIH, and FSCPQCGKSFSRKTHLVRHQLIH. Residue K368 forms a Glycyl lysine isopeptide (Lys-Gly) (interchain with G-Cter in SUMO2) linkage.

This sequence belongs to the krueppel C2H2-type zinc-finger protein family. In terms of assembly, interacts with STAT3. Enhances STAT3 activity by keeping it in the nucleus.

The protein resides in the nucleus. Functionally, transcription factor that promotes adipocyte differentiation and suppresses osteoblast differentiation in the bone marrow. Enhances the osteoclast-supporting ability of stromal cells. Binds with STAT3 the consensus sequence 5'-CTTCTGGGAAGA-3' of the acute phase response element (APRE). Transactivates several promoters including FOS, OSM and PPARG. Recruits a histone deacetylase complex. The polypeptide is Zinc finger protein 467 (ZNF467) (Homo sapiens (Human)).